Reading from the N-terminus, the 108-residue chain is MNLFLVLFVFSFSVSQFFAVEAGGRKHKHQEVCIGSDGKGHQLNQFWYDNGNCRRFYCYKDEDGLVIEQTTNCELAVAENDCRIKPGKAGRYPDCCPSVECPQESKAS.

An N-terminal signal peptide occupies residues 1 to 19 (MNLFLVLFVFSFSVSQFFA).

The protein belongs to the scoloptoxin-16 family. In terms of processing, contains 4 disulfide bonds. Expressed by the venom gland.

The protein localises to the secreted. The polypeptide is U-scoloptoxin(16)-Sm1a (Scolopendra morsitans (Tanzanian blue ringleg centipede)).